The chain runs to 489 residues: Probable guanine deaminase (489 aa).

Zn(2+) is bound by residues His100 and His102. Substrate is bound by residues 102-105 (HVSQ), 231-232 (RF), 258-261 (HLSE), and Asp348. Zn(2+)-binding residues include His258 and Asp348.

Belongs to the metallo-dependent hydrolases superfamily. ATZ/TRZ family. The cofactor is Zn(2+).

The protein resides in the cytoplasm. The catalysed reaction is guanine + H2O + H(+) = xanthine + NH4(+). It participates in purine metabolism; guanine degradation; xanthine from guanine: step 1/1. Its function is as follows. Catalyzes the hydrolytic deamination of guanine, producing xanthine and ammonia. The chain is Probable guanine deaminase (GUD1) from Saccharomyces cerevisiae (strain ATCC 204508 / S288c) (Baker's yeast).